Reading from the N-terminus, the 284-residue chain is Homeobox protein SIX1 (284 aa).

Residues 124-183 constitute a DNA-binding region (homeobox); that stretch reads GEETSYCFKEKSRGVLREWYAHNPYPSPREKRELAEATGLTTTQVSNWFKNRRQRDRAAE. The disordered stretch occupies residues 168-284; that stretch reads VSNWFKNRRQ…LTSSLVDLGS (117 aa). Basic and acidic residues predominate over residues 179 to 190; that stretch reads DRAAEAKERENT. The span at 227-284 shows a compositional bias: polar residues; that stretch reads DQNSVLLLQSNMGHARSSNYSLPGLTASQPSHGLQAHQHQLQDSLLGPLTSSLVDLGS.

Belongs to the SIX/Sine oculis homeobox family. In terms of assembly, interacts with DACH1. Interacts with EYA1. Interacts with EYA2. Interacts with CDH1. Interacts with TBX18. Interacts with CEBPA. Interacts with CEBPB. Interacts with EBF2. Phosphorylated during interphase; becomes hyperphosphorylated during mitosis. Hyperphosphorylation impairs binding to promoter elements. In terms of processing, ubiquitinated by the anaphase promoting complex (APC), leading to its proteasomal degradation. As to expression, expressed in phalangeal tendons and in skeletal muscle and in head and body mesenchyme.

It is found in the nucleus. Its subcellular location is the cytoplasm. In terms of biological role, transcription factor that is involved in the regulation of cell proliferation, apoptosis and embryonic development. Plays an important role in the development of several organs, including kidney, muscle and inner ear. Depending on context, functions as a transcriptional repressor or activator. Lacks an activation domain, and requires interaction with EYA family members for transcription activation. Mediates nuclear translocation of EYA1 and EYA2. Binds the 5'-TCA[AG][AG]TTNC-3' motif present in the MEF3 element in the MYOG promoter and CIDEA enhancer. Regulates the expression of numerous genes, including MYC, CCNA1, CCND1 and EZR. Acts as an activator of the IGFBP5 promoter, probably coactivated by EYA2. Repression of precursor cell proliferation in myoblasts is switched to activation through recruitment of EYA3 to the SIX1-DACH1 complex. During myogenesis, seems to act together with EYA2 and DACH2. Regulates the expression of CCNA1. Promotes brown adipocyte differentiation. This chain is Homeobox protein SIX1 (Six1), found in Mus musculus (Mouse).